We begin with the raw amino-acid sequence, 227 residues long: Cytochrome c oxidase subunit 2 (227 aa).

Over 1 to 14 (MAYSFQLGLQDATS) the chain is Mitochondrial intermembrane. The helical transmembrane segment at 15–45 (PIMEELMNFHDHTLMIVFLISSLVLYIISLM) threads the bilayer. Residues 46–59 (LTTKLTHTSTMDAQ) lie on the Mitochondrial matrix side of the membrane. A helical transmembrane segment spans residues 60 to 87 (EVETIWTILPAVILIMIALPSLRILYMM). The Mitochondrial intermembrane segment spans residues 88-227 (DEINNPVLTV…HFENWSASMI (140 aa)). Residues His161, Cys196, Glu198, Cys200, His204, and Met207 each coordinate Cu cation. Glu198 is a Mg(2+) binding site.

This sequence belongs to the cytochrome c oxidase subunit 2 family. Component of the cytochrome c oxidase (complex IV, CIV), a multisubunit enzyme composed of 14 subunits. The complex is composed of a catalytic core of 3 subunits MT-CO1, MT-CO2 and MT-CO3, encoded in the mitochondrial DNA, and 11 supernumerary subunits COX4I, COX5A, COX5B, COX6A, COX6B, COX6C, COX7A, COX7B, COX7C, COX8 and NDUFA4, which are encoded in the nuclear genome. The complex exists as a monomer or a dimer and forms supercomplexes (SCs) in the inner mitochondrial membrane with NADH-ubiquinone oxidoreductase (complex I, CI) and ubiquinol-cytochrome c oxidoreductase (cytochrome b-c1 complex, complex III, CIII), resulting in different assemblies (supercomplex SCI(1)III(2)IV(1) and megacomplex MCI(2)III(2)IV(2)). Found in a complex with TMEM177, COA6, COX18, COX20, SCO1 and SCO2. Interacts with TMEM177 in a COX20-dependent manner. Interacts with COX20. Interacts with COX16. It depends on Cu cation as a cofactor.

It is found in the mitochondrion inner membrane. It carries out the reaction 4 Fe(II)-[cytochrome c] + O2 + 8 H(+)(in) = 4 Fe(III)-[cytochrome c] + 2 H2O + 4 H(+)(out). In terms of biological role, component of the cytochrome c oxidase, the last enzyme in the mitochondrial electron transport chain which drives oxidative phosphorylation. The respiratory chain contains 3 multisubunit complexes succinate dehydrogenase (complex II, CII), ubiquinol-cytochrome c oxidoreductase (cytochrome b-c1 complex, complex III, CIII) and cytochrome c oxidase (complex IV, CIV), that cooperate to transfer electrons derived from NADH and succinate to molecular oxygen, creating an electrochemical gradient over the inner membrane that drives transmembrane transport and the ATP synthase. Cytochrome c oxidase is the component of the respiratory chain that catalyzes the reduction of oxygen to water. Electrons originating from reduced cytochrome c in the intermembrane space (IMS) are transferred via the dinuclear copper A center (CU(A)) of subunit 2 and heme A of subunit 1 to the active site in subunit 1, a binuclear center (BNC) formed by heme A3 and copper B (CU(B)). The BNC reduces molecular oxygen to 2 water molecules using 4 electrons from cytochrome c in the IMS and 4 protons from the mitochondrial matrix. The chain is Cytochrome c oxidase subunit 2 (MT-CO2) from Praomys jacksoni (African forest rat).